The chain runs to 253 residues: Adenosylcobinamide-GDP ribazoletransferase (253 aa).

7 consecutive transmembrane segments (helical) span residues 33–53 (ISPL…YVLL), 56–76 (ILEA…RGFN), 106–126 (IGSG…VALL), 132–152 (FYTI…GLYI), 178–198 (VLLF…FLVF), 209–229 (LGGS…PLFL), and 233–253 (EITN…LYLH).

It belongs to the CobS family. The cofactor is Mg(2+).

It is found in the cell membrane. It catalyses the reaction alpha-ribazole + adenosylcob(III)inamide-GDP = adenosylcob(III)alamin + GMP + H(+). The catalysed reaction is alpha-ribazole 5'-phosphate + adenosylcob(III)inamide-GDP = adenosylcob(III)alamin 5'-phosphate + GMP + H(+). It participates in cofactor biosynthesis; adenosylcobalamin biosynthesis; adenosylcobalamin from cob(II)yrinate a,c-diamide: step 7/7. Its function is as follows. Joins adenosylcobinamide-GDP and alpha-ribazole to generate adenosylcobalamin (Ado-cobalamin). Also synthesizes adenosylcobalamin 5'-phosphate from adenosylcobinamide-GDP and alpha-ribazole 5'-phosphate. This chain is Adenosylcobinamide-GDP ribazoletransferase, found in Saccharolobus islandicus (strain M.16.27) (Sulfolobus islandicus).